The primary structure comprises 142 residues: Small ribosomal subunit protein uS12 (142 aa).

The protein belongs to the universal ribosomal protein uS12 family. In terms of assembly, part of the 30S ribosomal subunit.

In terms of biological role, with S4 and S5 plays an important role in translational accuracy. Located at the interface of the 30S and 50S subunits. This chain is Small ribosomal subunit protein uS12, found in Methanosarcina barkeri (strain Fusaro / DSM 804).